The sequence spans 391 residues: Casein kinase II subunit alpha (391 aa).

An interaction with beta subunit region spans residues 36–41; that stretch reads QDDYQL. Positions 39–324 constitute a Protein kinase domain; the sequence is YQLVRKLGRG…AREAMEHPYF (286 aa). ATP-binding positions include 45-53 and lysine 68; that span reads LGRGKYSEV. Aspartate 156 (proton acceptor) is an active-site residue. Phosphothreonine; by CDK1 is present on residues threonine 344 and threonine 360. Phosphoserine; by CDK1 occurs at positions 362 and 370.

It belongs to the protein kinase superfamily. Ser/Thr protein kinase family. CK2 subfamily. In terms of assembly, heterotetramer composed of two catalytic subunits (alpha chain and/or alpha' chain) and two regulatory subunits (beta chains). The tetramer can exist as a combination of 2 alpha/2 beta, 2 alpha'/2 beta or 1 alpha/1 alpha'/2 beta subunits. Also part of a CK2-SPT16-SSRP1 complex composed of SSRP1, SUPT16H, CSNK2A1, CSNK2A2 and CSNK2B, which forms following UV irradiation. Interacts with RNPS1. Interacts with SNAI1. Interacts with PML. Interacts with CCAR2. Interacts with HIRIP3. Post-translationally, phosphorylated at Thr-344, Thr-360, Ser-362 and Ser-370 by CDK1 in prophase and metaphase and dephosphorylated during anaphase. Phosphorylation does not directly affect casein kinase 2 activity, but may contribute to its regulation by forming binding sites for interacting proteins and/or targeting it to different compartments.

It localises to the nucleus. The enzyme catalyses L-seryl-[protein] + ATP = O-phospho-L-seryl-[protein] + ADP + H(+). It carries out the reaction L-threonyl-[protein] + ATP = O-phospho-L-threonyl-[protein] + ADP + H(+). Its activity is regulated as follows. Constitutively active protein kinase whose activity is not directly affected by phosphorylation. Seems to be regulated by level of expression and localization. Its function is as follows. Catalytic subunit of a constitutively active serine/threonine-protein kinase complex that phosphorylates a large number of substrates containing acidic residues C-terminal to the phosphorylated serine or threonine. Regulates numerous cellular processes, such as cell cycle progression, apoptosis and transcription, as well as viral infection. May act as a regulatory node which integrates and coordinates numerous signals leading to an appropriate cellular response. During mitosis, functions as a component of the p53/TP53-dependent spindle assembly checkpoint (SAC) that maintains cyclin-B-CDK1 activity and G2 arrest in response to spindle damage. Also required for p53/TP53-mediated apoptosis, phosphorylating 'Ser-392' of p53/TP53 following UV irradiation. Phosphorylates a number of DNA repair proteins in response to DNA damage, such as MDC1, MRE11, RAD9A, RAD51 and HTATSF1, promoting their recruitment to DNA damage sites. Can also negatively regulate apoptosis. Phosphorylates the caspases CASP9 and CASP2 and the apoptotic regulator NOL3. Phosphorylation protects CASP9 from cleavage and activation by CASP8, and inhibits the dimerization of CASP2 and activation of CASP8. Phosphorylates YY1, protecting YY1 from cleavage by CASP7 during apoptosis. Regulates transcription by direct phosphorylation of RNA polymerases I, II, III and IV. Also phosphorylates and regulates numerous transcription factors including NF-kappa-B, STAT1, CREB1, IRF1, IRF2, ATF1, ATF4, SRF, MAX, JUN, FOS, MYC and MYB. Phosphorylates Hsp90 and its co-chaperones FKBP4 and CDC37, which is essential for chaperone function. Mediates sequential phosphorylation of FNIP1, promoting its gradual interaction with Hsp90, leading to activate both kinase and non-kinase client proteins of Hsp90. Regulates Wnt signaling by phosphorylating CTNNB1 and the transcription factor LEF1. Acts as an ectokinase that phosphorylates several extracellular proteins. Phosphorylates PML at 'Ser-565' and primes it for ubiquitin-mediated degradation. Plays an important role in the circadian clock function by phosphorylating BMAL1 at 'Ser-90' which is pivotal for its interaction with CLOCK and which controls CLOCK nuclear entry. Phosphorylates FMR1, promoting FMR1-dependent formation of a membraneless compartment. May phosphorylate histone H2A on 'Ser-1'. This Rattus norvegicus (Rat) protein is Casein kinase II subunit alpha (Csnk2a1).